The chain runs to 223 residues: Cytidylate kinase (223 aa).

13 to 21 (GPSASGKGT) provides a ligand contact to ATP.

The protein belongs to the cytidylate kinase family. Type 1 subfamily.

It localises to the cytoplasm. It carries out the reaction CMP + ATP = CDP + ADP. The catalysed reaction is dCMP + ATP = dCDP + ADP. This is Cytidylate kinase from Nitrosomonas europaea (strain ATCC 19718 / CIP 103999 / KCTC 2705 / NBRC 14298).